The sequence spans 352 residues: C-C chemokine receptor type 5 (352 aa).

The Extracellular portion of the chain corresponds to 1-30; the sequence is MDYQVSSPTYDIDYYTSEPCQKVNVKQIAA. Tyr-3 carries the sulfotyrosine modification. O-linked (GalNAc...) serine glycans are attached at residues Ser-6 and Ser-7. Sulfotyrosine is present on residues Tyr-10, Tyr-14, and Tyr-15. 2 disulfide bridges follow: Cys-20-Cys-269 and Cys-101-Cys-178. The helical transmembrane segment at 31–58 threads the bilayer; sequence RLLPPLYSLVFIFGFVGNILVVLILINC. The Cytoplasmic portion of the chain corresponds to 59–68; the sequence is KRLKSMTDIY. A helical membrane pass occupies residues 69 to 89; sequence LLNLAISDLFFLLTVPFWAHY. Residues 90–102 lie on the Extracellular side of the membrane; that stretch reads AAAQWDFGNTMCQ. Residues 103–124 form a helical membrane-spanning segment; the sequence is LLTGLYFIGFFSGIFFIILLTI. The Cytoplasmic portion of the chain corresponds to 125–141; it reads DRYLAIVHAVFALKART. A helical transmembrane segment spans residues 142–166; that stretch reads VTFGVVTSVITWVVAVFASLPGIIF. Topologically, residues 167 to 198 are extracellular; that stretch reads TRSQREGLHYTCSSHFPYSQYQFWKNFQTLKI. The chain crosses the membrane as a helical span at residues 199-218; the sequence is VILGLVLPLLVMVICYSGIL. The Cytoplasmic portion of the chain corresponds to 219–235; sequence KTLLRCRNEKKRHRAVR. The chain crosses the membrane as a helical span at residues 236-260; sequence LIFTIMIVYFLFWAPYNIVLLLNTF. At 261–277 the chain is on the extracellular side; it reads QEFFGLNNCSSSNRLDQ. Residues 278–301 form a helical membrane-spanning segment; it reads AMQVTETLGMTHCCINPIIYAFVG. Over 302–352 the chain is Cytoplasmic; that stretch reads EKFRNYLLVFFQKHIAKRFCKCCYIFQQEAPERASSVYTRSTGEQEISVGL. S-palmitoyl cysteine attachment occurs at residues Cys-321, Cys-323, and Cys-324. Ser-336, Ser-337, Ser-342, and Ser-349 each carry phosphoserine; by BARK1.

Belongs to the G-protein coupled receptor 1 family. As to quaternary structure, interacts with PRAF2. Efficient ligand binding to CCL3/MIP-1alpha and CCL4/MIP-1beta requires sulfation, O-glycosylation and sialic acid modifications. Glycosylation on Ser-6 is required for efficient binding of CCL4. Interacts with GRK2. Interacts with ARRB1 and ARRB2. Interacts with CNIH4. Interacts with S100A4; this interaction stimulates T-lymphocyte chemotaxis. In terms of processing, sulfated on at least 2 of the N-terminal tyrosines. Sulfation is required for efficient binding of the chemokines, CCL3 and CCL4. Palmitoylation in the C-terminal is important for cell surface expression. Post-translationally, phosphorylation on serine residues in the C-terminal is stimulated by binding CC chemokines especially by APO-RANTES. In terms of processing, O-glycosylated, but not N-glycosylated. Ser-6 appears to be the major site even if Ser-7 may be also O-glycosylated. Also sialylated glycans present which contribute to chemokine binding. Thr-16 and Ser-17 may also be glycosylated and, if so, with small moieties such as a T-antigen.

The protein resides in the cell membrane. In terms of biological role, receptor for a number of inflammatory CC-chemokines including CCL3/MIP-1-alpha, CCL4/MIP-1-beta and RANTES and subsequently transduces a signal by increasing the intracellular calcium ion level. May play a role in the control of granulocytic lineage proliferation or differentiation. Participates in T-lymphocyte migration to the infection site by acting as a chemotactic receptor. In Rhinopithecus bieti (Black snub-nosed monkey), this protein is C-C chemokine receptor type 5 (CCR5).